Reading from the N-terminus, the 290-residue chain is Bifunctional protein FolD (290 aa).

NADP(+)-binding positions include 164 to 166 (GRS), serine 193, and isoleucine 234.

Belongs to the tetrahydrofolate dehydrogenase/cyclohydrolase family. As to quaternary structure, homodimer.

The catalysed reaction is (6R)-5,10-methylene-5,6,7,8-tetrahydrofolate + NADP(+) = (6R)-5,10-methenyltetrahydrofolate + NADPH. The enzyme catalyses (6R)-5,10-methenyltetrahydrofolate + H2O = (6R)-10-formyltetrahydrofolate + H(+). The protein operates within one-carbon metabolism; tetrahydrofolate interconversion. Functionally, catalyzes the oxidation of 5,10-methylenetetrahydrofolate to 5,10-methenyltetrahydrofolate and then the hydrolysis of 5,10-methenyltetrahydrofolate to 10-formyltetrahydrofolate. The sequence is that of Bifunctional protein FolD from Cytophaga hutchinsonii (strain ATCC 33406 / DSM 1761 / CIP 103989 / NBRC 15051 / NCIMB 9469 / D465).